We begin with the raw amino-acid sequence, 242 residues long: UPF0273 protein TM_0370 (242 aa).

The 240-residue stretch at 3–242 folds into the KaiC domain; the sequence is KRVKTGIPGM…IYPSEGGEGR (240 aa). Residue 30-37 participates in ATP binding; sequence GGPGTGKT.

This sequence belongs to the UPF0273 family.

The chain is UPF0273 protein TM_0370 from Thermotoga maritima (strain ATCC 43589 / DSM 3109 / JCM 10099 / NBRC 100826 / MSB8).